Here is a 569-residue protein sequence, read N- to C-terminus: Zinc finger and BTB domain-containing protein 7A (569 aa).

The BTB domain occupies 34–101 (CDVVILVEGR…AYTATLTVST (68 aa)). A disordered region spans residues 214–304 (YGPGPPADRP…LSGAAEGEDG (91 aa)). The segment at 275–569 (EEEAAALSEA…VATAEGNFAT (295 aa)) is mediates interaction with KHDRBS1. A compositionally biased stretch (low complexity) spans 279-288 (AALSEAAPEP). Serine 331 and serine 335 each carry phosphoserine. Residues 343-569 (MDYYLKYFSG…VATAEGNFAT (227 aa)) form a mediates interaction with RELA region. A mediates interaction with SMAD4 region spans residues 371 to 569 (RAKAFQKCPI…VATAEGNFAT (199 aa)). 2 consecutive C2H2-type zinc fingers follow at residues 376–398 (QKCP…IRTH) and 404–426 (YECN…MRKH). Lysine 430 is covalently cross-linked (Glycyl lysine isopeptide (Lys-Gly) (interchain with G-Cter in SUMO2)). The C2H2-type 3 zinc finger occupies 432 to 454 (YLCQQCGAAFAHNYDLKNHMRVH). The C2H2-type 4; atypical zinc finger occupies 460-484 (YQCDSCCKTFVRSDHLHRHLKKDGC). The disordered stretch occupies residues 480-569 (KKDGCNGVPS…VATAEGNFAT (90 aa)). Residues 498-519 (RGVPPDVPAGAGAPPGLPDAPR) show a composition bias toward low complexity. A Glycyl lysine isopeptide (Lys-Gly) (interchain with G-Cter in SUMO2) cross-link involves residue lysine 527. Serine 537 bears the Phosphoserine mark. Residues 548-557 (GSGGDDGAGG) show a composition bias toward gly residues.

In terms of assembly, homodimer. Interacts with BCL6. Interacts with RELA; involved in the control by RELA of the accessibility of target gene promoters. Interacts with AR (via NR LBD domain); the interaction is direct and androgen-dependent. Interacts with NCOR1. Interacts with NCOR2. Interacts with SMAD4; the interaction is direct and stimulated by TGFB1. Interacts with HDAC1. Interacts with SP1; ZBTB7A prevents the binding to GC-rich motifs in promoters and represses the transcriptional activity of SP1. Interacts with the DNA-dependent protein kinase complex/DNA-PKc. Interacts with KHDRBS1; negatively regulates KHDRBS1 splicing activity. In terms of processing, sumoylated. Undergoes sumoylation with SUMO1 that may regulate its transcriptional activity. Widely expressed. In normal thymus, expressed in medullary epithelial cells and Hassle's corpuscles (at protein level). In the spleen, mainly expressed in the white pulp germinal centers (at protein level). Up-regulated in thymic lymphomas.

The protein resides in the nucleus. Transcription factor that represses the transcription of a wide range of genes involved in cell proliferation and differentiation. Directly and specifically binds to the consensus sequence 5'-[GA][CA]GACCCCCCCCC-3' and represses transcription both by regulating the organization of chromatin and through the direct recruitment of transcription factors to gene regulatory regions. Negatively regulates SMAD4 transcriptional activity in the TGF-beta signaling pathway through these two mechanisms. That is, recruits the chromatin regulator HDAC1 to the SMAD4-DNA complex and in parallel prevents the recruitment of the transcriptional activators CREBBP and EP300. Collaborates with transcription factors like RELA to modify the accessibility of gene transcription regulatory regions to secondary transcription factors. Also directly interacts with transcription factors like SP1 to prevent their binding to DNA. Functions as an androgen receptor/AR transcriptional corepressor by recruiting NCOR1 and NCOR2 to the androgen response elements/ARE on target genes. Thereby, negatively regulates androgen receptor signaling and androgen-induced cell proliferation. Involved in the switch between fetal and adult globin expression during erythroid cells maturation. Through its interaction with the NuRD complex regulates chromatin at the fetal globin genes to repress their transcription. Specifically represses the transcription of the tumor suppressor ARF isoform from the CDKN2A gene. Efficiently abrogates E2F1-dependent CDKN2A transactivation. Regulates chondrogenesis through the transcriptional repression of specific genes via a mechanism that also requires histone deacetylation. Regulates cell proliferation through the transcriptional regulation of genes involved in glycolysis. Involved in adipogenesis through the regulation of genes involved in adipocyte differentiation. Plays a key role in the differentiation of lymphoid progenitors into B and T lineages. Promotes differentiation towards the B lineage by inhibiting the T-cell instructive Notch signaling pathway through the specific transcriptional repression of Notch downstream target genes. Also regulates osteoclast differentiation. May also play a role, independently of its transcriptional activity, in double-strand break repair via classical non-homologous end joining/cNHEJ. Recruited to double-strand break sites on damage DNA, interacts with the DNA-dependent protein kinase complex and directly regulates its stability and activity in DNA repair. May also modulate the splicing activity of KHDRBS1 toward BCL2L1 in a mechanism which is histone deacetylase-dependent and thereby negatively regulates the pro-apoptotic effect of KHDRBS1. This is Zinc finger and BTB domain-containing protein 7A from Mus musculus (Mouse).